Reading from the N-terminus, the 423-residue chain is Probable multifunctional protein ADE2 (423 aa).

The segment at 1-263 is SAICAR synthetase; it reads MSSLAEIASR…KVMDITATFS (263 aa). An AIR carboxylase region spans residues 264-423; it reads KHQQKCHVLV…NIYNANRKLE (160 aa).

The protein in the N-terminal section; belongs to the SAICAR synthetase family. It in the C-terminal section; belongs to the AIR carboxylase family. Class II subfamily.

It catalyses the reaction 5-amino-1-(5-phospho-D-ribosyl)imidazole-4-carboxylate + L-aspartate + ATP = (2S)-2-[5-amino-1-(5-phospho-beta-D-ribosyl)imidazole-4-carboxamido]succinate + ADP + phosphate + 2 H(+). The enzyme catalyses 5-amino-1-(5-phospho-D-ribosyl)imidazole-4-carboxylate + H(+) = 5-amino-1-(5-phospho-beta-D-ribosyl)imidazole + CO2. It functions in the pathway purine metabolism; IMP biosynthesis via de novo pathway; 5-amino-1-(5-phospho-D-ribosyl)imidazole-4-carboxamide from 5-amino-1-(5-phospho-D-ribosyl)imidazole-4-carboxylate: step 1/2. The protein operates within purine metabolism; IMP biosynthesis via de novo pathway; 5-amino-1-(5-phospho-D-ribosyl)imidazole-4-carboxylate from 5-amino-1-(5-phospho-D-ribosyl)imidazole (carboxylase route): step 1/1. This chain is Probable multifunctional protein ADE2, found in Caenorhabditis elegans.